Consider the following 83-residue polypeptide: Cytochrome c5 (83 aa).

The heme c site is built by Cys-15, Cys-18, His-19, and Met-59. An intrachain disulfide couples Cys-65 to Cys-68.

Belongs to the cytochrome c family. Homodimer. In terms of processing, binds 1 heme c group covalently per subunit.

It is unreactive with cytochrome c reductase or oxidase. The chain is Cytochrome c5 from Azotobacter vinelandii.